We begin with the raw amino-acid sequence, 1620 residues long: Putative zinc carboxypeptidase (1620 aa).

Over Met-1 to Asn-1367 the chain is Extracellular. Residue Asn-19 is glycosylated (N-linked (GlcNAc...) asparagine). The disordered stretch occupies residues Arg-32–Lys-74. Residues Asn-33–Asn-43 are compositionally biased toward basic and acidic residues. Acidic residues predominate over residues Lys-44–Asp-55. Asn-56 and Asn-102 each carry an N-linked (GlcNAc...) asparagine glycan. Residues Gly-309 to Glu-328 form a disordered region. N-linked (GlcNAc...) asparagine glycans are attached at residues Asn-354, Asn-487, Asn-508, Asn-529, Asn-550, Asn-571, Asn-589, Asn-687, Asn-802, and Asn-1010. The possible malaria epitope stretch occupies residues Val-497–Ile-559. Positions Gly-1004–Tyr-1261 constitute a Peptidase M14 domain. Zn(2+) is bound by residues His-1059 and Glu-1062. Asn-1064 and Asn-1141 each carry an N-linked (GlcNAc...) asparagine glycan. His-1155 contacts Zn(2+). Glu-1229 acts as the Proton donor/acceptor in catalysis. Residues Asn-1279–His-1329 form a disordered region. Residues Leu-1368–Ser-1388 form a helical membrane-spanning segment. Residues Tyr-1389–Leu-1620 lie on the Cytoplasmic side of the membrane. Residues Pro-1560–Leu-1620 form a disordered region. Residues Asn-1581 to Ser-1597 show a composition bias toward basic and acidic residues. Residues Lys-1598–Leu-1620 show a composition bias toward basic residues.

Belongs to the peptidase M14 family. Requires Zn(2+) as cofactor.

The protein localises to the membrane. The chain is Putative zinc carboxypeptidase from Plasmodium falciparum (isolate 3D7).